Here is a 259-residue protein sequence, read N- to C-terminus: MAALMRSKDSSCCLLLLAAVLMVESSQIGSSRAKLNSIKSSLGGETPGQAANRSAGMYQGLAFGGSKKGKNLGQAYPCSSDKECEVGRYCHSPHQGSSACMVCRRKKKRCHRDGMCCPSTRCNNGICIPVTESILTPHIPALDGTRHRDRNHGHYSNHDLGWQNLGRPHTKMSHIKGHEGDPCLRSSDCIEGFCCARHFWTKICKPVLHQGEVCTKQRKKGSHGLEIFQRCDCAKGLSCKVWKDATYSSKARLHVCQKI.

Positions 1–33 (MAALMRSKDSSCCLLLLAAVLMVESSQIGSSRA) are cleaved as a signal peptide. Asn52 is a glycosylation site (N-linked (GlcNAc...) asparagine). Positions 78 to 127 (CSSDKECEVGRYCHSPHQGSSACMVCRRKKKRCHRDGMCCPSTRCNNGIC) are DKK-type Cys-1. Intrachain disulfides connect Cys183–Cys195, Cys189–Cys204, Cys194–Cys231, Cys214–Cys239, and Cys233–Cys256. Positions 183 to 256 (CLRSSDCIEG…YSSKARLHVC (74 aa)) are DKK-type Cys-2.

It belongs to the dickkopf family. In terms of assembly, interacts with LRP5 and LRP6. In terms of processing, may be proteolytically processed by a furin-like protease. As to expression, expressed in heart, brain, skeletal muscle and lung.

It localises to the secreted. Its function is as follows. Antagonizes canonical Wnt signaling by inhibiting LRP5/6 interaction with Wnt and by forming a ternary complex with the transmembrane protein KREMEN that promotes internalization of LRP5/6. DKKs play an important role in vertebrate development, where they locally inhibit Wnt regulated processes such as antero-posterior axial patterning, limb development, somitogenesis and eye formation. In the adult, Dkks are implicated in bone formation and bone disease, cancer and Alzheimer disease. This chain is Dickkopf-related protein 2 (DKK2), found in Homo sapiens (Human).